Reading from the N-terminus, the 135-residue chain is P2Y purinoceptor 4 (135 aa).

Residues 1-25 (VHFSSSVMVLLFGLPFLVTLVCYGL) traverse the membrane as a helical segment. Over 26 to 49 (MALRLCRPLPGAGQSSSRLRSLRT) the chain is Cytoplasmic. Residues 50 to 72 (IAVVMTVFAVCLVPFHITRTIYY) traverse the membrane as a helical segment. The Extracellular portion of the chain corresponds to 73–90 (LARLLKADCQILNIVNVV). Residues 91–112 (YKVTRPLASANSCLDPLLYLFT) form a helical membrane-spanning segment. Topologically, residues 113 to 135 (GDKYRHQLQRLCRVSAPQRRITA) are cytoplasmic.

The protein belongs to the G-protein coupled receptor 1 family. In terms of tissue distribution, expressed in brain, heart, stria vascularis and vestibular labyrinth.

The protein localises to the cell membrane. Receptor for ATP and UTP coupled to G-proteins that activate a phosphatidylinositol-calcium second messenger system. Not activated by UDP. The protein is P2Y purinoceptor 4 (P2RY4) of Meriones unguiculatus (Mongolian jird).